The sequence spans 68 residues: UPF0435 protein SAOUHSC_02093 (68 aa).

Belongs to the UPF0435 family.

This chain is UPF0435 protein SAOUHSC_02093, found in Staphylococcus aureus (strain NCTC 8325 / PS 47).